Reading from the N-terminus, the 135-residue chain is ATP synthase epsilon chain (135 aa).

The protein belongs to the ATPase epsilon chain family. As to quaternary structure, F-type ATPases have 2 components, CF(1) - the catalytic core - and CF(0) - the membrane proton channel. CF(1) has five subunits: alpha(3), beta(3), gamma(1), delta(1), epsilon(1). CF(0) has three main subunits: a, b and c.

Its subcellular location is the cell inner membrane. Produces ATP from ADP in the presence of a proton gradient across the membrane. This chain is ATP synthase epsilon chain, found in Rhizobium etli (strain ATCC 51251 / DSM 11541 / JCM 21823 / NBRC 15573 / CFN 42).